Reading from the N-terminus, the 113-residue chain is Putative increased recombination centers protein 14 (113 aa).

The sequence is that of Putative increased recombination centers protein 14 (IRC14) from Saccharomyces cerevisiae (strain ATCC 204508 / S288c) (Baker's yeast).